The primary structure comprises 273 residues: Putative pyruvate, phosphate dikinase regulatory protein (273 aa).

149–156 lines the ADP pocket; it reads GPSRTSKT.

The protein belongs to the pyruvate, phosphate/water dikinase regulatory protein family. PDRP subfamily.

The enzyme catalyses N(tele)-phospho-L-histidyl/L-threonyl-[pyruvate, phosphate dikinase] + ADP = N(tele)-phospho-L-histidyl/O-phospho-L-threonyl-[pyruvate, phosphate dikinase] + AMP + H(+). It catalyses the reaction N(tele)-phospho-L-histidyl/O-phospho-L-threonyl-[pyruvate, phosphate dikinase] + phosphate + H(+) = N(tele)-phospho-L-histidyl/L-threonyl-[pyruvate, phosphate dikinase] + diphosphate. Its function is as follows. Bifunctional serine/threonine kinase and phosphorylase involved in the regulation of the pyruvate, phosphate dikinase (PPDK) by catalyzing its phosphorylation/dephosphorylation. This chain is Putative pyruvate, phosphate dikinase regulatory protein, found in Rickettsia conorii (strain ATCC VR-613 / Malish 7).